A 208-amino-acid chain; its full sequence is Intraflagellar transport protein 43 homolog (208 aa).

2 disordered regions span residues 1 to 105 and 187 to 208; these read MDDN…EDIP and SELQ…PVCV. Basic and acidic residues predominate over residues 78-88; the sequence is AAAEEPEDRRL.

Belongs to the IFT43 family. Component of the IFT complex A (IFT-A) complex.

The protein resides in the cytoplasm. It localises to the cytoskeleton. The protein localises to the cell projection. Its subcellular location is the cilium. Its function is as follows. As a component of IFT complex A (IFT-A), a complex required for retrograde ciliary transport and entry into cilia of G protein-coupled receptors (GPCRs), it is involved in ciliogenesis. Involved in retrograde ciliary transport along microtubules from the ciliary tip to the base. This is Intraflagellar transport protein 43 homolog (ift43) from Danio rerio (Zebrafish).